Consider the following 1227-residue polypeptide: Beta-alanyl-bioamine nonribosomal peptide synthetase (1227 aa).

The adenylation stretch occupies residues 1-850 (MPQSTAQLKS…FGKNSRDFKL (850 aa)). Residues 851–931 (SRGRERARKV…SILTSLQNTE (81 aa)) form the Carrier domain. Ser892 bears the O-(pantetheine 4'-phosphoryl)serine mark. The interval 932–1227 (SDFLKTQEPF…YMIKELNPSS (296 aa)) is condensation.

This sequence belongs to the NRP synthetase family. Requires pantetheine 4'-phosphate as cofactor. In terms of tissue distribution, in virgin and paired males, bilaterally expressed in some cells in the head. During pairing, expressed throughout the ventral side of the body probably in ciliated neurons. Highly expressed in virgin females in cells throughout the body and only weakly expressed in sexually mature females. In virgin females, expressed in some cells in the head and on the dorsal surface and lateral edges of body.

The catalysed reaction is tryptamine + beta-alanine + ATP = beta-alanyl-tryptamine + AMP + diphosphate + H(+). It catalyses the reaction beta-alanine + ATP + H(+) = beta-alanyl-5'-AMP + diphosphate. It carries out the reaction beta-alanyl-5'-AMP + holo-[peptidyl-carrier protein] = beta-alanyl-[peptidyl-carrier protein] + AMP + H(+). The enzyme catalyses beta-alanyl-[peptidyl-carrier protein] + tryptamine = beta-alanyl-tryptamine + holo-[peptidyl-carrier protein] + H(+). Functionally, catalyzes the condensation of beta-alanine with tryptamine to form beta-alanyl-tryptamine (BATT). Beta-alanyl-tryptamine is an essential pheromone produced by the male that stimulates female sexual development during pairing. This chain is Beta-alanyl-bioamine nonribosomal peptide synthetase, found in Schistosoma mansoni (Blood fluke).